The primary structure comprises 134 residues: Putative membrane protein insertion efficiency factor (134 aa).

It belongs to the UPF0161 family.

Its subcellular location is the cell inner membrane. Functionally, could be involved in insertion of integral membrane proteins into the membrane. The chain is Putative membrane protein insertion efficiency factor from Rhizobium etli (strain ATCC 51251 / DSM 11541 / JCM 21823 / NBRC 15573 / CFN 42).